We begin with the raw amino-acid sequence, 276 residues long: UPF0276 protein PA4106 (276 aa).

The protein belongs to the UPF0276 family.

The protein is UPF0276 protein PA4106 of Pseudomonas aeruginosa (strain ATCC 15692 / DSM 22644 / CIP 104116 / JCM 14847 / LMG 12228 / 1C / PRS 101 / PAO1).